The sequence spans 453 residues: Na(+)/H(+) antiporter NhaA 2 (453 aa).

11 consecutive transmembrane segments (helical) span residues 32–52, 71–91, 109–129, 140–160, 169–189, 193–213, 232–252, 284–304, 310–330, 356–376, and 382–402; these read GALL…PGAA, LSLA…VAGL, AVPI…YVLI, GWAI…AVIG, VFLL…IAVF, NLSV…AILL, ALVH…ALVV, AVPV…GGLV, PVAI…VIAV, MLAG…FAAG, and HVKI…AVIL. The segment at 409 to 453 is disordered; sequence GSRGNDATTRDPDQTRVGTATQRTTPDHPTPAATDANQPARSPAP.

Belongs to the NhaA Na(+)/H(+) (TC 2.A.33) antiporter family.

The protein resides in the cell membrane. The catalysed reaction is Na(+)(in) + 2 H(+)(out) = Na(+)(out) + 2 H(+)(in). Its function is as follows. Na(+)/H(+) antiporter that extrudes sodium in exchange for external protons. The protein is Na(+)/H(+) antiporter NhaA 2 of Salinispora tropica (strain ATCC BAA-916 / DSM 44818 / JCM 13857 / NBRC 105044 / CNB-440).